Reading from the N-terminus, the 734-residue chain is Phosphoribosylformylglycinamidine synthase subunit PurL (734 aa).

Histidine 49 is an active-site residue. The ATP site is built by tyrosine 52 and lysine 91. Glutamate 93 is a Mg(2+) binding site. Substrate is bound by residues 94–97 (SHNH) and arginine 116. Histidine 95 functions as the Proton acceptor in the catalytic mechanism. Mg(2+) is bound at residue aspartate 117. Glutamine 240 contacts substrate. Aspartate 268 is a binding site for Mg(2+). 312-314 (ESQ) is a substrate binding site. The ATP site is built by aspartate 491 and glycine 528. Residue asparagine 529 participates in Mg(2+) binding. Residue serine 531 coordinates substrate.

It belongs to the FGAMS family. Monomer. Part of the FGAM synthase complex composed of 1 PurL, 1 PurQ and 2 PurS subunits.

It localises to the cytoplasm. It catalyses the reaction N(2)-formyl-N(1)-(5-phospho-beta-D-ribosyl)glycinamide + L-glutamine + ATP + H2O = 2-formamido-N(1)-(5-O-phospho-beta-D-ribosyl)acetamidine + L-glutamate + ADP + phosphate + H(+). It functions in the pathway purine metabolism; IMP biosynthesis via de novo pathway; 5-amino-1-(5-phospho-D-ribosyl)imidazole from N(2)-formyl-N(1)-(5-phospho-D-ribosyl)glycinamide: step 1/2. Its function is as follows. Part of the phosphoribosylformylglycinamidine synthase complex involved in the purines biosynthetic pathway. Catalyzes the ATP-dependent conversion of formylglycinamide ribonucleotide (FGAR) and glutamine to yield formylglycinamidine ribonucleotide (FGAM) and glutamate. The FGAM synthase complex is composed of three subunits. PurQ produces an ammonia molecule by converting glutamine to glutamate. PurL transfers the ammonia molecule to FGAR to form FGAM in an ATP-dependent manner. PurS interacts with PurQ and PurL and is thought to assist in the transfer of the ammonia molecule from PurQ to PurL. This Zymomonas mobilis subsp. mobilis (strain ATCC 31821 / ZM4 / CP4) protein is Phosphoribosylformylglycinamidine synthase subunit PurL.